A 635-amino-acid chain; its full sequence is Threonine--tRNA ligase (635 aa).

The TGS domain occupies 1–61; sequence MVSIRLPDGS…DRDASLAIVT (61 aa). The catalytic stretch occupies residues 242-533; that stretch reads DHRKLGKQLD…LIEHHAGAMP (292 aa). Cys-333, His-384, and His-510 together coordinate Zn(2+).

Belongs to the class-II aminoacyl-tRNA synthetase family. As to quaternary structure, homodimer. Zn(2+) serves as cofactor.

Its subcellular location is the cytoplasm. The enzyme catalyses tRNA(Thr) + L-threonine + ATP = L-threonyl-tRNA(Thr) + AMP + diphosphate + H(+). Its function is as follows. Catalyzes the attachment of threonine to tRNA(Thr) in a two-step reaction: L-threonine is first activated by ATP to form Thr-AMP and then transferred to the acceptor end of tRNA(Thr). Also edits incorrectly charged L-seryl-tRNA(Thr). In Burkholderia orbicola (strain MC0-3), this protein is Threonine--tRNA ligase.